A 452-amino-acid chain; its full sequence is Probable glycine dehydrogenase (decarboxylating) subunit 1 (452 aa).

It belongs to the GcvP family. N-terminal subunit subfamily. The glycine cleavage system is composed of four proteins: P, T, L and H. In this organism, the P 'protein' is a heterodimer of two subunits.

The catalysed reaction is N(6)-[(R)-lipoyl]-L-lysyl-[glycine-cleavage complex H protein] + glycine + H(+) = N(6)-[(R)-S(8)-aminomethyldihydrolipoyl]-L-lysyl-[glycine-cleavage complex H protein] + CO2. In terms of biological role, the glycine cleavage system catalyzes the degradation of glycine. The P protein binds the alpha-amino group of glycine through its pyridoxal phosphate cofactor; CO(2) is released and the remaining methylamine moiety is then transferred to the lipoamide cofactor of the H protein. The chain is Probable glycine dehydrogenase (decarboxylating) subunit 1 from Nitrosospira multiformis (strain ATCC 25196 / NCIMB 11849 / C 71).